The sequence spans 396 residues: S-adenosylmethionine synthase 2 (396 aa).

Glutamate 13 contributes to the Mg(2+) binding site. Position 19 (histidine 19) interacts with ATP. Residue glutamate 47 coordinates K(+). 2 residues coordinate L-methionine: glutamate 60 and glutamine 103. Residues 171–173 (DGK), 239–242 (SGRF), aspartate 250, 256–257 (RK), alanine 273, lysine 277, and lysine 281 contribute to the ATP site. Aspartate 250 contributes to the L-methionine binding site. Lysine 281 contributes to the L-methionine binding site.

It belongs to the AdoMet synthase family. Homotetramer. It depends on Mn(2+) as a cofactor. Mg(2+) serves as cofactor. Requires Co(2+) as cofactor. K(+) is required as a cofactor.

The protein resides in the cytoplasm. It catalyses the reaction L-methionine + ATP + H2O = S-adenosyl-L-methionine + phosphate + diphosphate. It functions in the pathway amino-acid biosynthesis; S-adenosyl-L-methionine biosynthesis; S-adenosyl-L-methionine from L-methionine: step 1/1. Its function is as follows. Catalyzes the formation of S-adenosylmethionine from methionine and ATP. The reaction comprises two steps that are both catalyzed by the same enzyme: formation of S-adenosylmethionine (AdoMet) and triphosphate, and subsequent hydrolysis of the triphosphate. This chain is S-adenosylmethionine synthase 2 (SAM2), found in Dianthus caryophyllus (Carnation).